We begin with the raw amino-acid sequence, 367 residues long: Glutamate 5-kinase (367 aa).

Residue lysine 10 participates in ATP binding. Positions 50, 137, and 149 each coordinate substrate. ATP is bound by residues 169–170 (TD) and 211–217 (TGGMSTK). Residues 275–353 (AGEITVDEGA…QQIDAILGYE (79 aa)) enclose the PUA domain.

The protein belongs to the glutamate 5-kinase family.

The protein localises to the cytoplasm. It carries out the reaction L-glutamate + ATP = L-glutamyl 5-phosphate + ADP. Its pathway is amino-acid biosynthesis; L-proline biosynthesis; L-glutamate 5-semialdehyde from L-glutamate: step 1/2. Functionally, catalyzes the transfer of a phosphate group to glutamate to form L-glutamate 5-phosphate. This Salmonella paratyphi A (strain ATCC 9150 / SARB42) protein is Glutamate 5-kinase.